We begin with the raw amino-acid sequence, 201 residues long: Protein GrpE (201 aa).

This sequence belongs to the GrpE family. Homodimer.

It is found in the cytoplasm. Functionally, participates actively in the response to hyperosmotic and heat shock by preventing the aggregation of stress-denatured proteins, in association with DnaK and GrpE. It is the nucleotide exchange factor for DnaK and may function as a thermosensor. Unfolded proteins bind initially to DnaJ; upon interaction with the DnaJ-bound protein, DnaK hydrolyzes its bound ATP, resulting in the formation of a stable complex. GrpE releases ADP from DnaK; ATP binding to DnaK triggers the release of the substrate protein, thus completing the reaction cycle. Several rounds of ATP-dependent interactions between DnaJ, DnaK and GrpE are required for fully efficient folding. The polypeptide is Protein GrpE (Shewanella frigidimarina (strain NCIMB 400)).